Reading from the N-terminus, the 477-residue chain is Erythritol/L-threitol-binding protein (477 aa).

The segment at residues 1-38 (MMSRESQPGLHRQLSRRNMLAAMGLAGAAAVSLPVLSA) is a signal peptide (tat-type signal).

This sequence belongs to the bacterial solute-binding protein 1 family. Post-translationally, predicted to be exported by the Tat system. The position of the signal peptide cleavage has not been experimentally proven.

Part of an ABC transporter complex involved in erythritol/L-threitol import. Binds erythritol and L-threitol. Functions in the transport for the degradation pathways of erythritol and L-threitol, that allow M.smegmatis to grow on these compounds as the sole carbon source. The polypeptide is Erythritol/L-threitol-binding protein (Mycolicibacterium smegmatis (strain ATCC 700084 / mc(2)155) (Mycobacterium smegmatis)).